The chain runs to 253 residues: 3-deoxy-manno-octulosonate cytidylyltransferase (253 aa).

This sequence belongs to the KdsB family.

It is found in the cytoplasm. It carries out the reaction 3-deoxy-alpha-D-manno-oct-2-ulosonate + CTP = CMP-3-deoxy-beta-D-manno-octulosonate + diphosphate. The protein operates within nucleotide-sugar biosynthesis; CMP-3-deoxy-D-manno-octulosonate biosynthesis; CMP-3-deoxy-D-manno-octulosonate from 3-deoxy-D-manno-octulosonate and CTP: step 1/1. It participates in bacterial outer membrane biogenesis; lipopolysaccharide biosynthesis. Its function is as follows. Activates KDO (a required 8-carbon sugar) for incorporation into bacterial lipopolysaccharide in Gram-negative bacteria. This Aeromonas hydrophila subsp. hydrophila (strain ATCC 7966 / DSM 30187 / BCRC 13018 / CCUG 14551 / JCM 1027 / KCTC 2358 / NCIMB 9240 / NCTC 8049) protein is 3-deoxy-manno-octulosonate cytidylyltransferase.